Consider the following 259-residue polypeptide: Putative aldolase class 2 protein PA3430 (259 aa).

Zn(2+) contacts are provided by His-113, His-115, and His-176.

It belongs to the aldolase class II family. Requires Zn(2+) as cofactor.

In Pseudomonas aeruginosa (strain ATCC 15692 / DSM 22644 / CIP 104116 / JCM 14847 / LMG 12228 / 1C / PRS 101 / PAO1), this protein is Putative aldolase class 2 protein PA3430.